Reading from the N-terminus, the 688-residue chain is Translation initiation factor IF-2 (688 aa).

Positions 54–95 are disordered; sequence KEKSEKTKEEDDEIETTAKNPIKESTNNKKPNKRDDKNEKVN. Basic and acidic residues predominate over residues 86–95; it reads KRDDKNEKVN. One can recognise a tr-type G domain in the interval 187 to 354; that stretch reads KRSPIITVMG…MILLSSEILE (168 aa). The interval 196-203 is G1; that stretch reads GHVDHGKT. Residue 196-203 coordinates GTP; sequence GHVDHGKT. Residues 221–225 form a G2 region; the sequence is GITQH. The tract at residues 242–245 is G3; that stretch reads DTPG. Residues 242–246 and 296–299 contribute to the GTP site; these read DTPGH and NKID. The segment at 296–299 is G4; the sequence is NKID. The G5 stretch occupies residues 332–334; sequence SAH.

The protein belongs to the TRAFAC class translation factor GTPase superfamily. Classic translation factor GTPase family. IF-2 subfamily.

Its subcellular location is the cytoplasm. One of the essential components for the initiation of protein synthesis. Protects formylmethionyl-tRNA from spontaneous hydrolysis and promotes its binding to the 30S ribosomal subunits. Also involved in the hydrolysis of GTP during the formation of the 70S ribosomal complex. The chain is Translation initiation factor IF-2 from Clostridium botulinum (strain Okra / Type B1).